A 441-amino-acid polypeptide reads, in one-letter code: Cysteine--tRNA ligase (441 aa).

Cys24 is a Zn(2+) binding site. The short motif at 26-36 (PTIYDYIHIGN) is the 'HIGH' region element. Zn(2+) is bound by residues Cys204, His230, and Glu234. The 'KMSKS' region motif lies at 262 to 266 (KMSKS). Position 265 (Lys265) interacts with ATP.

This sequence belongs to the class-I aminoacyl-tRNA synthetase family. As to quaternary structure, monomer. It depends on Zn(2+) as a cofactor.

The protein resides in the cytoplasm. It catalyses the reaction tRNA(Cys) + L-cysteine + ATP = L-cysteinyl-tRNA(Cys) + AMP + diphosphate. The sequence is that of Cysteine--tRNA ligase from Mesoplasma florum (strain ATCC 33453 / NBRC 100688 / NCTC 11704 / L1) (Acholeplasma florum).